Here is a 246-residue protein sequence, read N- to C-terminus: Proteasome subunit alpha type-6-B (246 aa).

Belongs to the peptidase T1A family. As to quaternary structure, component of the 20S core complex of the 26S proteasome. The 26S proteasome is composed of a core protease (CP), known as the 20S proteasome, capped at one or both ends by the 19S regulatory particle (RP/PA700). The 20S proteasome core is composed of 28 subunits that are arranged in four stacked rings, resulting in a barrel-shaped structure. The two end rings are each formed by seven alpha subunits, and the two central rings are each formed by seven beta subunits. The catalytic chamber with the active sites is on the inside of the barrel.

Its subcellular location is the cytoplasm. It localises to the nucleus. Functionally, the proteasome is a multicatalytic proteinase complex which is characterized by its ability to cleave peptides with Arg, Phe, Tyr, Leu, and Glu adjacent to the leaving group at neutral or slightly basic pH. The proteasome has an ATP-dependent proteolytic activity. The polypeptide is Proteasome subunit alpha type-6-B (PAA2) (Arabidopsis thaliana (Mouse-ear cress)).